A 290-amino-acid chain; its full sequence is uncharacterized protein (290 aa).

Its subcellular location is the cytoplasm. This is an uncharacterized protein from Saccharomyces cerevisiae (strain ATCC 204508 / S288c) (Baker's yeast).